Here is a 130-residue protein sequence, read N- to C-terminus: Chemotaxis protein CheY-3 (130 aa).

Positions 10-127 (KILIVDDFST…TLKEKLDKIF (118 aa)) constitute a Response regulatory domain. The Mg(2+) site is built by Asp15, Asp16, Asp60, and Asn62. Residue Asp60 is modified to 4-aspartylphosphate.

Interacts with FliM. Requires Mg(2+) as cofactor.

It localises to the cytoplasm. Its function is as follows. Acts as a response regulator to control chemotaxis. Involved in the transmission of sensory signals from the chemoreceptors to the flagellar motors. Switches the flagellar rotation by binding to the flagellar motor switch protein FliM. In its active (phosphorylated or acetylated) form, exhibits enhanced binding to a switch component, FliM, at the flagellar motor which induces a change from counterclockwise to clockwise flagellar rotation. In Vibrio cholerae serotype O1 (strain ATCC 39315 / El Tor Inaba N16961), this protein is Chemotaxis protein CheY-3.